We begin with the raw amino-acid sequence, 335 residues long: Coiled-coil domain-containing protein 68 (335 aa).

Positions 101 to 305 (QLLEMNKENE…KTQVALSSET (205 aa)) form a coiled coil.

In terms of assembly, interacts with CEP170. Expressed in bone marrow, colon, small intestine, spleen, testis, trachea and cutaneous T-cell lymphoma (CTCL).

The protein resides in the cytoplasm. It is found in the cytoskeleton. Its subcellular location is the microtubule organizing center. The protein localises to the centrosome. It localises to the centriole. Centriolar protein required for centriole subdistal appendage assembly and microtubule anchoring in interphase cells. Together with CCDC120, cooperate with subdistal appendage components ODF2, NIN and CEP170 for hierarchical subdistal appendage assembly. This Homo sapiens (Human) protein is Coiled-coil domain-containing protein 68 (CCDC68).